The primary structure comprises 565 residues: NAD-dependent malic enzyme (565 aa).

The active-site Proton donor is Tyr-104. Arg-157 contributes to the NAD(+) binding site. The active-site Proton acceptor is Lys-175. A divalent metal cation contacts are provided by Glu-246, Asp-247, and Asp-270. Residues Asp-270 and Asn-418 each coordinate NAD(+).

The protein belongs to the malic enzymes family. As to quaternary structure, homotetramer. The cofactor is Mg(2+). Mn(2+) is required as a cofactor.

The enzyme catalyses (S)-malate + NAD(+) = pyruvate + CO2 + NADH. It catalyses the reaction oxaloacetate + H(+) = pyruvate + CO2. This Escherichia coli O139:H28 (strain E24377A / ETEC) protein is NAD-dependent malic enzyme.